Reading from the N-terminus, the 488-residue chain is Adenylosuccinate synthetase 1, chloroplastic (488 aa).

The N-terminal 47 residues, 1–47 (MSLSTVNHAAAAAAAAAGPGKSFSAAAPAAPSVRLPRTRAPAAAAVS), are a transit peptide targeting the chloroplast. GTP-binding positions include 75–81 (GDEGKGK) and 103–105 (GHT). Aspartate 76 functions as the Proton acceptor in the catalytic mechanism. Mg(2+) is bound by residues aspartate 76 and glycine 103. IMP is bound by residues 76–79 (DEGK), 101–104 (NAGH), threonine 193, arginine 207, glutamine 287, threonine 302, and arginine 366. Residue histidine 104 is the Proton donor of the active site. 362 to 368 (TTTGRPR) serves as a coordination point for substrate. Residues arginine 368, 394–396 (KLD), and 477–479 (GVG) each bind GTP.

Belongs to the adenylosuccinate synthetase family. Homodimer. Mg(2+) serves as cofactor.

It is found in the plastid. The protein localises to the chloroplast. The catalysed reaction is IMP + L-aspartate + GTP = N(6)-(1,2-dicarboxyethyl)-AMP + GDP + phosphate + 2 H(+). It participates in purine metabolism; AMP biosynthesis via de novo pathway; AMP from IMP: step 1/2. Functionally, plays an important role in the de novo pathway and in the salvage pathway of purine nucleotide biosynthesis. Catalyzes the first committed step in the biosynthesis of AMP from IMP. In Oryza sativa subsp. japonica (Rice), this protein is Adenylosuccinate synthetase 1, chloroplastic.